We begin with the raw amino-acid sequence, 773 residues long: ATP-dependent RNA helicase MAK5 (773 aa).

A compositionally biased stretch (basic and acidic residues) spans 73-82; that stretch reads KDSNKEKVGD. Disordered regions lie at residues 73-99 and 114-144; these read KDSNKEKVGDDQESVENESGSDSESEL and SAASYSSSDEDEQGNIESSKLTDPSEDVDED. The segment covering 83–99 has biased composition (acidic residues); the sequence is DQESVENESGSDSESEL. The residue at position 135 (threonine 135) is a Phosphothreonine. Phosphoserine is present on serine 138. Positions 171-199 match the Q motif motif; it reads EWTNLAPLSMTILQSLQNLNFLRPTEIQK. The Helicase ATP-binding domain occupies 202-399; that stretch reads IPVIMQGVDV…SSSRQVKDRR (198 aa). 215-222 is a binding site for ATP; that stretch reads ASTGSGKT. The DEAD box motif lies at 333–336; the sequence is DEAD. Residues 452-615 enclose the Helicase C-terminal domain; it reads DLYCYYFLTM…STDLNSRSTN (164 aa). At serine 678 the chain carries Phosphoserine.

It belongs to the DEAD box helicase family. DDX24/MAK5 subfamily.

It localises to the nucleus. The protein localises to the nucleolus. It carries out the reaction ATP + H2O = ADP + phosphate + H(+). Functionally, ATP-binding RNA helicase involved in the biogenesis of 60S ribosomal subunits and is required for the normal formation of 25S and 5.8S rRNAs. Required for the maintenance of dsRNA killer plasmid. The chain is ATP-dependent RNA helicase MAK5 (MAK5) from Saccharomyces cerevisiae (strain ATCC 204508 / S288c) (Baker's yeast).